The primary structure comprises 270 residues: Aliphatic sulfonates import ATP-binding protein SsuB (270 aa).

Positions 17–238 (LASKGLRKTF…ARGSHRLAAL (222 aa)) constitute an ABC transporter domain. 49–56 (GRSGCGKS) contacts ATP. The disordered stretch occupies residues 248 to 270 (STPGTAPEPDPVAPLPTQLRWAH).

It belongs to the ABC transporter superfamily. Aliphatic sulfonates importer (TC 3.A.1.17.2) family. As to quaternary structure, the complex is composed of two ATP-binding proteins (SsuB), two transmembrane proteins (SsuC) and a solute-binding protein (SsuA).

The protein localises to the cell inner membrane. The enzyme catalyses ATP + H2O + aliphatic sulfonate-[sulfonate-binding protein]Side 1 = ADP + phosphate + aliphatic sulfonateSide 2 + [sulfonate-binding protein]Side 1.. Its function is as follows. Part of the ABC transporter complex SsuABC involved in aliphatic sulfonates import. Responsible for energy coupling to the transport system. This chain is Aliphatic sulfonates import ATP-binding protein SsuB, found in Pseudomonas putida (strain ATCC 47054 / DSM 6125 / CFBP 8728 / NCIMB 11950 / KT2440).